Reading from the N-terminus, the 516-residue chain is GMP synthase [glutamine-hydrolyzing] (516 aa).

The region spanning 8–198 (KILILDFGSQ…VVNICGCDTL (191 aa)) is the Glutamine amidotransferase type-1 domain. Cysteine 84 (nucleophile) is an active-site residue. Residues histidine 172 and glutamate 174 contribute to the active site. Residues 199 to 391 (WNIENIIEND…LGLPYNMLYR (193 aa)) form the GMPS ATP-PPase domain. 226–232 (SGGVDSS) lines the ATP pocket.

As to quaternary structure, homodimer.

The enzyme catalyses XMP + L-glutamine + ATP + H2O = GMP + L-glutamate + AMP + diphosphate + 2 H(+). Its pathway is purine metabolism; GMP biosynthesis; GMP from XMP (L-Gln route): step 1/1. Functionally, catalyzes the synthesis of GMP from XMP. This Francisella tularensis subsp. novicida (strain U112) protein is GMP synthase [glutamine-hydrolyzing].